We begin with the raw amino-acid sequence, 314 residues long: Putative S-adenosyl-L-methionine-dependent methyltransferase MUL_4402 (314 aa).

S-adenosyl-L-methionine contacts are provided by residues Asp-132 and 161–162; that span reads DL. The segment at 291–314 is disordered; that stretch reads RPVPDDAEGPVPPTLFVSAHRPAA.

It belongs to the UPF0677 family.

Functionally, exhibits S-adenosyl-L-methionine-dependent methyltransferase activity. The sequence is that of Putative S-adenosyl-L-methionine-dependent methyltransferase MUL_4402 from Mycobacterium ulcerans (strain Agy99).